The chain runs to 326 residues: Aspartate carbamoyltransferase catalytic subunit (326 aa).

Carbamoyl phosphate-binding residues include Arg76 and Thr77. Residue Lys104 coordinates L-aspartate. Carbamoyl phosphate is bound by residues Arg126, His156, and Gln159. Arg189 and Arg244 together coordinate L-aspartate. The carbamoyl phosphate site is built by Gly285 and Pro286.

Belongs to the aspartate/ornithine carbamoyltransferase superfamily. ATCase family. In terms of assembly, heterododecamer (2C3:3R2) of six catalytic PyrB chains organized as two trimers (C3), and six regulatory PyrI chains organized as three dimers (R2).

It carries out the reaction carbamoyl phosphate + L-aspartate = N-carbamoyl-L-aspartate + phosphate + H(+). It participates in pyrimidine metabolism; UMP biosynthesis via de novo pathway; (S)-dihydroorotate from bicarbonate: step 2/3. Its function is as follows. Catalyzes the condensation of carbamoyl phosphate and aspartate to form carbamoyl aspartate and inorganic phosphate, the committed step in the de novo pyrimidine nucleotide biosynthesis pathway. The protein is Aspartate carbamoyltransferase catalytic subunit of Polynucleobacter asymbioticus (strain DSM 18221 / CIP 109841 / QLW-P1DMWA-1) (Polynucleobacter necessarius subsp. asymbioticus).